A 105-amino-acid chain; its full sequence is uncharacterized protein (105 aa).

A helical membrane pass occupies residues alanine 25–isoleucine 47. A disordered region spans residues glycine 54 to lysine 89.

The protein resides in the membrane. This is an uncharacterized protein from Saccharomyces cerevisiae (strain ATCC 204508 / S288c) (Baker's yeast).